A 531-amino-acid chain; its full sequence is ATP synthase subunit beta (531 aa).

The segment at 1–48 (MVKAVTSSKETAKVEKKKSAPRSGVKKAVSKSQAGVKDSSSPVHKSSK) is disordered. Residues 19–29 (SAPRSGVKKAV) show a composition bias toward basic residues. Residues 30–44 (SKSQAGVKDSSSPVH) are compositionally biased toward polar residues. Position 203–210 (203–210 (GGAGVGKT)) interacts with ATP.

Belongs to the ATPase alpha/beta chains family. As to quaternary structure, F-type ATPases have 2 components, CF(1) - the catalytic core - and CF(0) - the membrane proton channel. CF(1) has five subunits: alpha(3), beta(3), gamma(1), delta(1), epsilon(1). CF(0) has three main subunits: a(1), b(2) and c(9-12). The alpha and beta chains form an alternating ring which encloses part of the gamma chain. CF(1) is attached to CF(0) by a central stalk formed by the gamma and epsilon chains, while a peripheral stalk is formed by the delta and b chains.

The protein resides in the cell inner membrane. It carries out the reaction ATP + H2O + 4 H(+)(in) = ADP + phosphate + 5 H(+)(out). Functionally, produces ATP from ADP in the presence of a proton gradient across the membrane. The catalytic sites are hosted primarily by the beta subunits. The polypeptide is ATP synthase subunit beta (Bartonella henselae (strain ATCC 49882 / DSM 28221 / CCUG 30454 / Houston 1) (Rochalimaea henselae)).